We begin with the raw amino-acid sequence, 340 residues long: Glyceraldehyde-3-phosphate dehydrogenase (340 aa).

NAD(+) is bound by residues 11–12 and glycine 111; that span reads SI. D-glyceraldehyde 3-phosphate is bound at residue 140–142; the sequence is SCN. Cysteine 141 (nucleophile) is an active-site residue. Residue arginine 169 participates in NAD(+) binding. D-glyceraldehyde 3-phosphate is bound at residue 195–196; sequence HG. Glutamine 303 provides a ligand contact to NAD(+).

It belongs to the glyceraldehyde-3-phosphate dehydrogenase family. As to quaternary structure, homotetramer.

The protein localises to the cytoplasm. It carries out the reaction D-glyceraldehyde 3-phosphate + phosphate + NADP(+) = (2R)-3-phospho-glyceroyl phosphate + NADPH + H(+). It catalyses the reaction D-glyceraldehyde 3-phosphate + phosphate + NAD(+) = (2R)-3-phospho-glyceroyl phosphate + NADH + H(+). Its pathway is carbohydrate degradation; glycolysis; pyruvate from D-glyceraldehyde 3-phosphate: step 1/5. This is Glyceraldehyde-3-phosphate dehydrogenase from Methanococcus maripaludis (strain C5 / ATCC BAA-1333).